An 89-amino-acid polypeptide reads, in one-letter code: Elongation factor 1-beta (89 aa).

The protein belongs to the EF-1-beta/EF-1-delta family.

Its function is as follows. Promotes the exchange of GDP for GTP in EF-1-alpha/GDP, thus allowing the regeneration of EF-1-alpha/GTP that could then be used to form the ternary complex EF-1-alpha/GTP/AAtRNA. The chain is Elongation factor 1-beta from Methanosarcina barkeri (strain Fusaro / DSM 804).